Reading from the N-terminus, the 819-residue chain is DNA mismatch repair protein MutS (819 aa).

596–603 (GPNMSGKS) contributes to the ATP binding site.

The protein belongs to the DNA mismatch repair MutS family.

This protein is involved in the repair of mismatches in DNA. It is possible that it carries out the mismatch recognition step. This protein has a weak ATPase activity. The sequence is that of DNA mismatch repair protein MutS from Thermosipho melanesiensis (strain DSM 12029 / CIP 104789 / BI429).